Reading from the N-terminus, the 393-residue chain is Acetylornithine aminotransferase 1 (393 aa).

Arginine 131 lines the N(2)-acetyl-L-ornithine pocket. Pyridoxal 5'-phosphate is bound at residue 215–218; that stretch reads DEVQ. N6-(pyridoxal phosphate)lysine is present on lysine 244. Position 272 (threonine 272) interacts with N(2)-acetyl-L-ornithine. Position 273 (threonine 273) interacts with pyridoxal 5'-phosphate.

Belongs to the class-III pyridoxal-phosphate-dependent aminotransferase family. ArgD subfamily. Homodimer. Pyridoxal 5'-phosphate serves as cofactor.

Its subcellular location is the cytoplasm. It carries out the reaction N(2)-acetyl-L-ornithine + 2-oxoglutarate = N-acetyl-L-glutamate 5-semialdehyde + L-glutamate. It participates in amino-acid biosynthesis; L-arginine biosynthesis; N(2)-acetyl-L-ornithine from L-glutamate: step 4/4. This chain is Acetylornithine aminotransferase 1, found in Bordetella bronchiseptica (strain ATCC BAA-588 / NCTC 13252 / RB50) (Alcaligenes bronchisepticus).